Consider the following 1071-residue polypeptide: Fused isobutyryl-CoA mutase (1071 aa).

The 138-residue stretch at 12 to 149 (PVRFVTSAAL…QTCDVDLTGE (138 aa)) folds into the B12-binding domain. H25 is a binding site for adenosylcob(III)alamin. Positions 153–400 (VEAVLAGERT…YQHLLELLGA (248 aa)) are GTPase chaperone MeaI. 203-208 (GSGKSS) lines the GTP pocket. Mg(2+) contacts are provided by S207, V232, D233, and D246. R249 provides a ligand contact to GTP. Residues E293 and T294 each contribute to the Mg(2+) site. 340-343 (NKFE) serves as a coordination point for GTP. The segment at 401 to 558 (RGLPVDEGVL…RSENLPGHFP (158 aa)) is linker. F566, R601, R707, Y751, S800, R835, and K840 together coordinate substrate. GTP contacts are provided by E952 and N1070.

The protein belongs to the IcmF family. Homodimer. Adenosylcob(III)alamin is required as a cofactor. Requires Mg(2+) as cofactor.

The enzyme catalyses 2-methylpropanoyl-CoA = butanoyl-CoA. The catalysed reaction is GTP + H2O = GDP + phosphate + H(+). Functionally, catalyzes the reversible interconversion of isobutyryl-CoA and n-butyryl-CoA, using radical chemistry. Also exhibits GTPase activity, associated with its G-protein domain (MeaI) that functions as a chaperone that assists cofactor delivery and proper holo-enzyme assembly. Does not exhibit methylmalonyl-CoA mutase (MCM) activity. The chain is Fused isobutyryl-CoA mutase from Nocardia farcinica (strain IFM 10152).